A 735-amino-acid chain; its full sequence is Rho GTPase-activating protein SYDE1 (735 aa).

Disordered regions lie at residues 1 to 253, 601 to 655, and 669 to 706; these read MAEP…PYEV, PDTR…AGDW, and FLSG…FDAP. Residues 14 to 47 are compositionally biased toward basic and acidic residues; sequence RGREKLPRKKSDAKDRGRPAQRSEPKPPEPEPRV. The span at 151-160 shows a compositional bias: low complexity; the sequence is PTKTSRTKSP. Phosphoserine occurs at positions 224, 231, 235, and 244. Residues 249–366 enclose the C2 domain; the sequence is RPYEVGPSAR…FRGCQAQQLA (118 aa). In terms of domain architecture, Rho-GAP spans 398-604; it reads LPLQLLVERE…YLLQSWPDTR (207 aa). Over residues 669–679 the composition is skewed to basic and acidic residues; it reads FLSGPDYDHVT. Phosphoserine occurs at positions 681 and 683.

In terms of processing, palmitoylated. Probably palmitoylated by ZDHHC3 and ZDHHC7.

GTPase activator for the Rho-type GTPases. As a GCM1 downstream effector, it is involved in placental development and positively regulates trophoblast cells migration. It regulates cytoskeletal remodeling by controlling the activity of Rho GTPases including RHOA, CDC42 and RAC1. The polypeptide is Rho GTPase-activating protein SYDE1 (Syde1) (Rattus norvegicus (Rat)).